The sequence spans 232 residues: Ubiquinone biosynthesis O-methyltransferase (232 aa).

The S-adenosyl-L-methionine site is built by Arg-36, Gly-55, Asp-76, and Leu-120.

Belongs to the methyltransferase superfamily. UbiG/COQ3 family.

It catalyses the reaction a 3-demethylubiquinol + S-adenosyl-L-methionine = a ubiquinol + S-adenosyl-L-homocysteine + H(+). It carries out the reaction a 3-(all-trans-polyprenyl)benzene-1,2-diol + S-adenosyl-L-methionine = a 2-methoxy-6-(all-trans-polyprenyl)phenol + S-adenosyl-L-homocysteine + H(+). It participates in cofactor biosynthesis; ubiquinone biosynthesis. In terms of biological role, O-methyltransferase that catalyzes the 2 O-methylation steps in the ubiquinone biosynthetic pathway. The sequence is that of Ubiquinone biosynthesis O-methyltransferase from Pseudomonas aeruginosa (strain ATCC 15692 / DSM 22644 / CIP 104116 / JCM 14847 / LMG 12228 / 1C / PRS 101 / PAO1).